The sequence spans 156 residues: Endogenous retrovirus group K member 10 Pro protein (156 aa).

Residues 21 to 96 (FEGLVDTGAD…IPLNLWGRDL (76 aa)) form the Peptidase A2 domain. Asp26 is a catalytic residue. The G-patch domain maps to 111–156 (YSPTSQKIMTKMGYIPGKGLGKNEDGIKVPVEAKINQEREGIGYPF).

Belongs to the peptidase A2 family. HERV class-II K(HML-2) subfamily. Active as a homodimer. Post-translationally, autoproteolytically processed at the N-terminus. Expected C-terminal autoprocessing not detected. The sequence shown is that of the processed Pro protein.

It catalyses the reaction Processing at the authentic HIV-1 PR recognition site and release of the mature p17 matrix and the p24 capsid protein, as a result of the cleavage of the -SQNY-|-PIVQ- cleavage site.. Resistant to a number of clinically useful HIV-1 PR inhibitors. Inhibited by cyclic urea SD146. Retroviral proteases have roles in processing of the primary translation products and the maturation of the viral particle. Endogenous Pro proteins may have kept, lost or modified their original function during evolution. This endogenous protein has retained most of the characteristics of retroviral proteases. The chain is Endogenous retrovirus group K member 10 Pro protein (ERVK-10) from Homo sapiens (Human).